Consider the following 238-residue polypeptide: 1-(5-phosphoribosyl)-5-[(5-phosphoribosylamino)methylideneamino] imidazole-4-carboxamide isomerase (238 aa).

The Proton acceptor role is filled by aspartate 7. Aspartate 129 serves as the catalytic Proton donor.

The protein belongs to the HisA/HisF family.

It is found in the cytoplasm. It carries out the reaction 1-(5-phospho-beta-D-ribosyl)-5-[(5-phospho-beta-D-ribosylamino)methylideneamino]imidazole-4-carboxamide = 5-[(5-phospho-1-deoxy-D-ribulos-1-ylimino)methylamino]-1-(5-phospho-beta-D-ribosyl)imidazole-4-carboxamide. Its pathway is amino-acid biosynthesis; L-histidine biosynthesis; L-histidine from 5-phospho-alpha-D-ribose 1-diphosphate: step 4/9. The chain is 1-(5-phosphoribosyl)-5-[(5-phosphoribosylamino)methylideneamino] imidazole-4-carboxamide isomerase from Leuconostoc mesenteroides subsp. mesenteroides (strain ATCC 8293 / DSM 20343 / BCRC 11652 / CCM 1803 / JCM 6124 / NCDO 523 / NBRC 100496 / NCIMB 8023 / NCTC 12954 / NRRL B-1118 / 37Y).